We begin with the raw amino-acid sequence, 76 residues long: Alpha/kappa-conotoxin pl14a (76 aa).

An N-terminal signal peptide occupies residues 1 to 24 (MPSVRSVTCCCLLWMMFSVQLVTP). The propeptide occupies 25–39 (GSPGTAQLSGHRTAR). 2 cysteine pairs are disulfide-bonded: Cys46-Cys61 and Cys50-Cys63. Arg64 is subject to Arginine amide. A propeptide spanning residues 65-76 (GKRDAVSSSMAV) is cleaved from the precursor.

Belongs to the conotoxin J superfamily. In terms of tissue distribution, expressed by the venom duct.

The protein localises to the secreted. In terms of biological role, highly inhibits both nicotinic acetylcholine receptors (neuronal (IC(50)=8.7 uM for alpha-3/beta-4) and muscular (IC(50)=0.54 uM for alpha-1-beta-1-epsilon-delta (CHRNA1-CHRNB1-CHRND-CHRNE)) subtypes) and the voltage-gated potassium channel Kv1.6/KCNA6 subtype (IC(50)=1.59 uM). This Conus planorbis (Planorbis cone) protein is Alpha/kappa-conotoxin pl14a.